Consider the following 92-residue polypeptide: N(2)-fixation sustaining protein CowN (92 aa).

This sequence belongs to the CowN family.

Functionally, is required to sustain N(2)-dependent growth in the presence of low levels of carbon monoxide (CO). Probably acts by protecting the N(2) fixation ability of the nitrogenase complex, which is inactivated in the presence of CO. The polypeptide is N(2)-fixation sustaining protein CowN (Rhodopseudomonas palustris (strain HaA2)).